Here is a 220-residue protein sequence, read N- to C-terminus: Uracil-DNA glycosylase (220 aa).

Asp61 acts as the Proton acceptor in catalysis.

This sequence belongs to the uracil-DNA glycosylase (UDG) superfamily. UNG family.

It is found in the cytoplasm. It catalyses the reaction Hydrolyzes single-stranded DNA or mismatched double-stranded DNA and polynucleotides, releasing free uracil.. Excises uracil residues from the DNA which can arise as a result of misincorporation of dUMP residues by DNA polymerase or due to deamination of cytosine. The protein is Uracil-DNA glycosylase of Glaesserella parasuis serovar 5 (strain SH0165) (Haemophilus parasuis).